The following is a 366-amino-acid chain: Photosynthetic reaction center cytochrome c subunit (366 aa).

The signal sequence occupies residues 1-22 (MALAVRISTLTVAVTAAALLAG). The N-palmitoyl cysteine moiety is linked to residue Cys-23. Cys-23 carries S-diacylglycerol cysteine lipidation. Residues Met-94, Cys-107, Cys-110, His-111, Met-129, His-143, Cys-151, Cys-154, His-155, Met-238, Cys-249, Cys-252, His-253, Cys-309, Cys-312, and His-313 each contribute to the heme site.

In terms of assembly, component of the photosynthetic reaction center composed of protein subunits L (PufL), M (PufM), H (PuhA) and cytochrome C (PufC). The reaction center interacts with light-harvesting antenna complex LH1. Post-translationally, binds 4 heme groups per subunit.

It is found in the cellular chromatophore membrane. The reaction center of purple bacteria contains a tightly bound cytochrome molecule which re-reduces the photo oxidized primary electron donor. This is Photosynthetic reaction center cytochrome c subunit (pufC) from Rubrivivax gelatinosus (strain NBRC 100245 / IL144).